Reading from the N-terminus, the 272-residue chain is Hemin import ATP-binding protein HmuV (272 aa).

One can recognise an ABC transporter domain in the interval 2–255 (LNADHLHVAR…EPIARCYGFR (254 aa)). 34 to 41 (GRNGAGKS) is a binding site for ATP.

This sequence belongs to the ABC transporter superfamily. Heme (hemin) importer (TC 3.A.1.14.5) family. The complex is composed of two ATP-binding proteins (HmuV), two transmembrane proteins (HmuU) and a solute-binding protein (HmuT).

The protein localises to the cell inner membrane. Part of the ABC transporter complex HmuTUV involved in hemin import. Responsible for energy coupling to the transport system. This is Hemin import ATP-binding protein HmuV from Burkholderia pseudomallei (strain 1710b).